A 108-amino-acid polypeptide reads, in one-letter code: Evasin P1229 (108 aa).

An N-terminal signal peptide occupies residues 1-31 (MEVRTFAFLQIVVFVALGIQLFAAVTDAADA). Intrachain disulfides connect Cys-41–Cys-63, Cys-45–Cys-65, and Cys-56–Cys-76. N-linked (GlcNAc...) asparagine glycosylation is present at Asn-44. The tract at residues 88-108 (GDPNNSDLDAATPRHPDASSR) is disordered. An N-linked (GlcNAc...) asparagine glycan is attached at Asn-91. The span at 99–108 (TPRHPDASSR) shows a compositional bias: basic and acidic residues.

Its subcellular location is the secreted. In terms of biological role, salivary chemokine-binding protein which binds to host chemokines CXCL1 and CXCL8. The sequence is that of Evasin P1229 from Ixodes ricinus (Common tick).